The following is a 363-amino-acid chain: Transcription factor PIF6 (363 aa).

2 disordered regions span residues 154–204 (SEGS…RNDI) and 340–363 (IPNP…KTNR). Residues 178-188 (RTRKALVKRKR) show a composition bias toward basic residues. One can recognise a bHLH domain in the interval 188 to 237 (RNAEAYNSPERNQRNDINKKMRTLQNLLPNSHKDDNESMLDEAINYMTNL). Positions 340–350 (IPNPNSLSNLD) are enriched in polar residues. A compositionally biased stretch (basic residues) spans 354-363 (LHKKSRKTNR).

Homodimer. Interacts with APRR1/TOC1. Binds to RGL2 and RGA. Associates to PTAC12/HMR/PAP5 which acts as a transcriptional coactivator. In terms of tissue distribution, mainly expressed in fruits and flowers and, to a lower extent, in leaves, stems, seedlings and roots.

Its subcellular location is the nucleus. Transcription factor. The protein is Transcription factor PIF6 of Arabidopsis thaliana (Mouse-ear cress).